A 247-amino-acid polypeptide reads, in one-letter code: Probable phosphatase swp_1620 (247 aa).

Zn(2+)-binding residues include His8, His10, His16, His41, Glu74, His102, His132, Asp193, and His195.

This sequence belongs to the PHP family. Zn(2+) serves as cofactor.

This Shewanella piezotolerans (strain WP3 / JCM 13877) protein is Probable phosphatase swp_1620.